The primary structure comprises 560 residues: Thermosome subunit 1 (560 aa).

The tract at residues 525 to 550 is disordered; the sequence is LSGGQTGSDDDDGGAPGGMGGGMGGM. The span at 538–550 shows a compositional bias: gly residues; the sequence is GAPGGMGGGMGGM.

It belongs to the TCP-1 chaperonin family. The thermosome or CCT complex is a oligomeric complex of two octameric double-ring structures; the complex is probably a heterooligomer of CCT1, CCT2 and CCT3 with yet unknown stoichiometry.

Molecular chaperone that assists in the folding or refolding of nascent or denatured proteins along with ATP hydrolysis. ATPase activity is highest in thermosome assemblies containing CCT1:CCT2, followed by assemblies containing CCT1:CCT2:CCT3. Required for thermosome ATPase activity. Not required for growth. This is Thermosome subunit 1 (cct1) from Haloferax volcanii (strain ATCC 29605 / DSM 3757 / JCM 8879 / NBRC 14742 / NCIMB 2012 / VKM B-1768 / DS2) (Halobacterium volcanii).